We begin with the raw amino-acid sequence, 121 residues long: Flagellar protein FliT (121 aa).

Positions 1–50 (MNNAPHLYFAWQQLVEKSQLMLRLATEEQWDELIASEMAYVNAVQEIAHL) are required for homodimerization. The interval 60 to 98 (MQEQLRPMLLLILDNESKVKQLLQIRMDELAKLVGQSSV) is fliD binding.

The protein belongs to the FliT family. As to quaternary structure, homodimer. Interacts with FliD and FlhC.

The protein resides in the cytoplasm. The protein localises to the cytosol. Dual-function protein that regulates the transcription of class 2 flagellar operons and that also acts as an export chaperone for the filament-capping protein FliD. As a transcriptional regulator, acts as an anti-FlhDC factor; it directly binds FlhC, thus inhibiting the binding of the FlhC/FlhD complex to class 2 promoters, resulting in decreased expression of class 2 flagellar operons. As a chaperone, effects FliD transition to the membrane by preventing its premature polymerization, and by directing it to the export apparatus. The sequence is that of Flagellar protein FliT from Escherichia coli O6:K15:H31 (strain 536 / UPEC).